Reading from the N-terminus, the 652-residue chain is DNA ligase (652 aa).

Residues 29–33 (DSEYD), 78–79 (SL), and Glu107 contribute to the NAD(+) site. Lys109 (N6-AMP-lysine intermediate) is an active-site residue. Arg130, Glu164, Lys278, and Lys302 together coordinate NAD(+). Residues Cys395, Cys398, Cys413, and Cys418 each coordinate Zn(2+). Positions 577 to 652 (VADAALSGLT…VRDEAWLESL (76 aa)) constitute a BRCT domain.

This sequence belongs to the NAD-dependent DNA ligase family. LigA subfamily. Mg(2+) is required as a cofactor. Requires Mn(2+) as cofactor.

The enzyme catalyses NAD(+) + (deoxyribonucleotide)n-3'-hydroxyl + 5'-phospho-(deoxyribonucleotide)m = (deoxyribonucleotide)n+m + AMP + beta-nicotinamide D-nucleotide.. In terms of biological role, DNA ligase that catalyzes the formation of phosphodiester linkages between 5'-phosphoryl and 3'-hydroxyl groups in double-stranded DNA using NAD as a coenzyme and as the energy source for the reaction. It is essential for DNA replication and repair of damaged DNA. In Streptococcus pneumoniae (strain P1031), this protein is DNA ligase.